The chain runs to 592 residues: Transmembrane 9 superfamily member 3 (592 aa).

The first 19 residues, 1–19 (MRLPTTLLLFIGALIFSGA), serve as a signal peptide directing secretion. The Lumenal segment spans residues 20 to 229 (GTVRSDASDH…SLPHHLEIHW (210 aa)). Residues 230–250 (FSIINSCVTVLLLTGFLATIL) traverse the membrane as a helical segment. Residues 251–302 (MRVLKNDFMKYAQDEEAADDQEETGWKYIHGDVFRFPKNKSLFAASLGSGTQ) lie on the Cytoplasmic side of the membrane. A helical transmembrane segment spans residues 303–323 (LFTLTIFIFMLSLVGVFYPYN). Topologically, residues 324–325 (RG) are lumenal. A helical membrane pass occupies residues 326–346 (ALFTALVVIYALTSGIAGYTA). The Cytoplasmic segment spans residues 347–365 (SSFYCQLEGKNWVRNLLLT). The helical transmembrane segment at 366–386 (GGLFCGPLFLTFCFLNTVAIA) threads the bilayer. The Lumenal portion of the chain corresponds to 387–397 (YSATAALPFGT). Residues 398–418 (IIVIVLIWTLVTSPLLVLGGI) traverse the membrane as a helical segment. Over 419–452 (AGKNSKAEFQAPVRTTKYPREIPPLPWYRSAVPQ) the chain is Cytoplasmic. The chain crosses the membrane as a helical span at residues 453–473 (MAMAGFLPFSAIYIELYYIFA). Topologically, residues 474–485 (SVWGHRIYTIYS) are lumenal. A helical transmembrane segment spans residues 486–506 (ILFIVFIILLIVTAFITVALT). The Cytoplasmic segment spans residues 507-521 (YFQLAAEDHEWWWRS). A helical transmembrane segment spans residues 522–542 (FLCGGSTGLFIYAYCLYYYYA). Over 543–553 (RSDMSGFMQTS) the chain is Lumenal. Residues 554 to 574 (FFFGYMACICYGFFLMLGTVG) form a helical membrane-spanning segment. Residues 575 to 592 (FRAALLFVRHIYRSIKCE) are Cytoplasmic-facing. The Endoplasmic reticulum export signal signature appears at 581–586 (FVRHIY). The Golgi retention signal signature appears at 590-592 (KCE).

It belongs to the nonaspanin (TM9SF) (TC 9.A.2) family.

The protein resides in the endosome membrane. It localises to the golgi apparatus membrane. This chain is Transmembrane 9 superfamily member 3, found in Arabidopsis thaliana (Mouse-ear cress).